The sequence spans 326 residues: Probable cell division protein WhiA (326 aa).

Positions 275 to 308 form a DNA-binding region, H-T-H motif; the sequence is SLEELGALADPPLTKDAIAGRIRRLLALADKRAR.

Belongs to the WhiA family.

Functionally, involved in cell division and chromosome segregation. The sequence is that of Probable cell division protein WhiA from Salinispora tropica (strain ATCC BAA-916 / DSM 44818 / JCM 13857 / NBRC 105044 / CNB-440).